The following is a 192-amino-acid chain: Peptidyl-tRNA hydrolase (192 aa).

Tyr18 lines the tRNA pocket. His23 (proton acceptor) is an active-site residue. Phe69, Asn71, and Asn117 together coordinate tRNA.

The protein belongs to the PTH family. In terms of assembly, monomer.

The protein localises to the cytoplasm. It catalyses the reaction an N-acyl-L-alpha-aminoacyl-tRNA + H2O = an N-acyl-L-amino acid + a tRNA + H(+). In terms of biological role, hydrolyzes ribosome-free peptidyl-tRNAs (with 1 or more amino acids incorporated), which drop off the ribosome during protein synthesis, or as a result of ribosome stalling. Catalyzes the release of premature peptidyl moieties from peptidyl-tRNA molecules trapped in stalled 50S ribosomal subunits, and thus maintains levels of free tRNAs and 50S ribosomes. The chain is Peptidyl-tRNA hydrolase from Neisseria meningitidis serogroup C (strain 053442).